The chain runs to 501 residues: Aspartate--tRNA ligase, cytoplasmic (501 aa).

At threonine 52 the chain carries Phosphothreonine. The residue at position 74 (lysine 74) is an N6-acetyllysine. Glutamate 229 provides a ligand contact to L-aspartate. At serine 249 the chain carries Phosphoserine. The interval 251–254 is aspartate; it reads QLYK. Arginine 273 serves as a coordination point for L-aspartate. ATP-binding positions include 273–275 and 281–283; these read RAE and RHL. Lysine 374 carries the N6-acetyllysine modification. A binding site for the 3'-end of tRNA region spans residues 411 to 415; the sequence is KQSNS. Residue glutamate 424 participates in ATP binding. Residues serine 427 and arginine 431 each coordinate L-aspartate. 472–475 lines the ATP pocket; sequence GLER. Threonine 500 is modified (phosphothreonine; by PKA).

The protein belongs to the class-II aminoacyl-tRNA synthetase family. Type 2 subfamily. As to quaternary structure, homodimer. Part of a multisubunit complex that groups tRNA ligases for Arg (RARS1), Asp (DARS1), Gln (QARS1), Ile (IARS1), Leu (LARS1), Lys (KARS1), Met (MARS1) the bifunctional ligase for Glu and Pro (EPRS1) and the auxiliary subunits AIMP1/p43, AIMP2/p38 and EEF1E1/p18.

The protein resides in the cytoplasm. The enzyme catalyses tRNA(Asp) + L-aspartate + ATP = L-aspartyl-tRNA(Asp) + AMP + diphosphate. Functionally, catalyzes the specific attachment of an amino acid to its cognate tRNA in a 2 step reaction: the amino acid (AA) is first activated by ATP to form AA-AMP and then transferred to the acceptor end of the tRNA. The chain is Aspartate--tRNA ligase, cytoplasmic (DARS1) from Pongo abelii (Sumatran orangutan).